A 417-amino-acid polypeptide reads, in one-letter code: NADH-quinone oxidoreductase subunit D (417 aa).

The protein belongs to the complex I 49 kDa subunit family. NDH-1 is composed of 14 different subunits. Subunits NuoB, C, D, E, F, and G constitute the peripheral sector of the complex.

The protein resides in the cell inner membrane. It carries out the reaction a quinone + NADH + 5 H(+)(in) = a quinol + NAD(+) + 4 H(+)(out). Its function is as follows. NDH-1 shuttles electrons from NADH, via FMN and iron-sulfur (Fe-S) centers, to quinones in the respiratory chain. The immediate electron acceptor for the enzyme in this species is believed to be ubiquinone. Couples the redox reaction to proton translocation (for every two electrons transferred, four hydrogen ions are translocated across the cytoplasmic membrane), and thus conserves the redox energy in a proton gradient. The sequence is that of NADH-quinone oxidoreductase subunit D from Francisella tularensis subsp. mediasiatica (strain FSC147).